The following is a 149-amino-acid chain: Myoglobin (149 aa).

Alanine 2 is subject to N-acetylalanine. The Globin domain maps to 2-143 (ABWDKVNSVW…ICSDIEKEYK (142 aa)). Histidine 89 provides a ligand contact to heme b.

This sequence belongs to the globin family. As to quaternary structure, monomeric.

Its subcellular location is the cytoplasm. It localises to the sarcoplasm. The catalysed reaction is Fe(III)-heme b-[protein] + nitric oxide + H2O = Fe(II)-heme b-[protein] + nitrite + 2 H(+). The enzyme catalyses H2O2 + AH2 = A + 2 H2O. Functionally, monomeric heme protein which primary function is to store oxygen and facilitate its diffusion within muscle tissues. Reversibly binds oxygen through a pentacoordinated heme iron and enables its timely and efficient release as needed during periods of heightened demand. Depending on the oxidative conditions of tissues and cells, and in addition to its ability to bind oxygen, it also has a nitrite reductase activity whereby it regulates the production of bioactive nitric oxide. Under stress conditions, like hypoxia and anoxia, it also protects cells against reactive oxygen species thanks to its pseudoperoxidase activity. The chain is Myoglobin (mb) from Hemitriakis japanica (Japanese topeshark).